The chain runs to 351 residues: Hydroxymethylglutaryl-CoA synthase (351 aa).

Residue E80 is the Proton donor/acceptor of the active site. C112 functions as the Acyl-thioester intermediate in the catalytic mechanism. 2 residues coordinate (3S)-3-hydroxy-3-methylglutaryl-CoA: C112 and S153. R199 provides a ligand contact to CoA. 2 residues coordinate (3S)-3-hydroxy-3-methylglutaryl-CoA: T201 and H234. The active-site Proton donor/acceptor is H234. Position 239 (K239) interacts with CoA. (3S)-3-hydroxy-3-methylglutaryl-CoA is bound by residues R243, N266, and S296.

The protein belongs to the thiolase-like superfamily. Archaeal HMG-CoA synthase family. As to quaternary structure, interacts with acetoacetyl-CoA thiolase that catalyzes the precedent step in the pathway and with a DUF35 protein. The acetoacetyl-CoA thiolase/HMG-CoA synthase complex channels the intermediate via a fused CoA-binding site, which allows for efficient coupling of the endergonic thiolase reaction with the exergonic HMGCS reaction.

The enzyme catalyses acetoacetyl-CoA + acetyl-CoA + H2O = (3S)-3-hydroxy-3-methylglutaryl-CoA + CoA + H(+). It participates in metabolic intermediate biosynthesis; (R)-mevalonate biosynthesis; (R)-mevalonate from acetyl-CoA: step 2/3. Its function is as follows. Catalyzes the condensation of acetyl-CoA with acetoacetyl-CoA to form 3-hydroxy-3-methylglutaryl-CoA (HMG-CoA). Functions in the mevalonate (MVA) pathway leading to isopentenyl diphosphate (IPP), a key precursor for the biosynthesis of isoprenoid compounds that are building blocks of archaeal membrane lipids. The sequence is that of Hydroxymethylglutaryl-CoA synthase from Thermoplasma acidophilum (strain ATCC 25905 / DSM 1728 / JCM 9062 / NBRC 15155 / AMRC-C165).